A 312-amino-acid chain; its full sequence is Ribosomal RNA small subunit methyltransferase H (312 aa).

Residues 37–39, Asp57, Phe83, and Asp104 each bind S-adenosyl-L-methionine; that span reads GGH.

The protein belongs to the methyltransferase superfamily. RsmH family.

Its subcellular location is the cytoplasm. It catalyses the reaction cytidine(1402) in 16S rRNA + S-adenosyl-L-methionine = N(4)-methylcytidine(1402) in 16S rRNA + S-adenosyl-L-homocysteine + H(+). In terms of biological role, specifically methylates the N4 position of cytidine in position 1402 (C1402) of 16S rRNA. This chain is Ribosomal RNA small subunit methyltransferase H, found in Malacoplasma penetrans (strain HF-2) (Mycoplasma penetrans).